Here is a 647-residue protein sequence, read N- to C-terminus: Carboxypeptidase Z (647 aa).

The first 18 residues, methionine 1–proline 18, serve as a signal peptide directing secretion. The FZ domain occupies alanine 35–proline 157. Disulfide bonds link cysteine 40–cysteine 106, cysteine 48–cysteine 99, cysteine 90–cysteine 126, cysteine 115–cysteine 154, and cysteine 119–cysteine 143. One can recognise a Peptidase M14 domain in the interval lysine 183 to valine 499. Positions 245 and 248 each coordinate Zn(2+). N-linked (GlcNAc...) asparagine glycosylation occurs at asparagine 278. Histidine 377 contributes to the Zn(2+) binding site. Glutamate 469 acts as the Proton donor/acceptor in catalysis.

It belongs to the peptidase M14 family. Interacts with WNT4 vie its FZ domain. It depends on Zn(2+) as a cofactor. As to expression, in the early embryo it is initially expressed throughout the somites and subsequently becomes restricted to the sclerotome. Expressed in somites, paraxial head mesoderm and apical ectodermal ridge.

Its subcellular location is the secreted. It is found in the extracellular space. The protein localises to the extracellular matrix. With respect to regulation, inhibited by 2-mercaptomethyl-3-guanidinoethylthiopropanoic acid (MGTA) and guanidinoethylmercaptosuccinic acid (GEMSA). Inhibited by chelating agents such as EDTA and EGTA. In terms of biological role, cleaves substrates with C-terminal arginine residues. Modulates the Wnt signaling pathway, probably by cleaving some undefined protein. Regulates the development of skeletal elements during development, probably by activating WNT4. The polypeptide is Carboxypeptidase Z (CPZ) (Gallus gallus (Chicken)).